Here is a 432-residue protein sequence, read N- to C-terminus: Fibrinogen gamma chain (432 aa).

Positions Met1–Ala24 are cleaved as a signal peptide. The region spanning Lys169–Gly412 is the Fibrinogen C-terminal domain. An intrachain disulfide couples Cys178 to Cys207. Asn227 carries N-linked (GlcNAc...) asparagine glycosylation. Ca(2+) is bound by residues Asp340, Asp342, Tyr344, and Gly346. The cysteines at positions 348 and 361 are disulfide-linked. Residues Arg413–Asn432 are disordered. Residues Gln421–Asn432 are compositionally biased toward polar residues.

As to quaternary structure, heterohexamer; disulfide linked. Contains 2 sets of 3 non-identical chains (alpha, beta and gamma). The 2 heterotrimers are in head to head conformation with the N-termini in a small central domain. Post-translationally, conversion of fibrinogen to fibrin is triggered by thrombin, which cleaves fibrinopeptides A and B from alpha and beta chains, and thus exposes the N-terminal polymerization sites responsible for the formation of the soft clot. The soft clot is converted into the hard clot by factor XIIIA which catalyzes the epsilon-(gamma-glutamyl)lysine cross-linking between gamma chains (stronger) and between alpha chains (weaker) of different monomers.

The protein localises to the secreted. Its function is as follows. Together with fibrinogen alpha (FGA) and fibrinogen beta (FGB), polymerizes to form an insoluble fibrin matrix. Has a major function in hemostasis as one of the primary components of blood clots. The chain is Fibrinogen gamma chain (FGG) from Petromyzon marinus (Sea lamprey).